Here is a 422-residue protein sequence, read N- to C-terminus: Choline monooxygenase, chloroplastic (422 aa).

The transit peptide at 1-47 (MMTTLTATVPEFLPPSLKSTRGYFNSHSEFGVSISKFSRRRFHNPTR) directs the protein to the chloroplast. In terms of domain architecture, Rieske spans 96–203 (WQAVGYSDQI…VAVWGPFVLL (108 aa)). Cys-138, His-140, Cys-157, and His-160 together coordinate [2Fe-2S] cluster. Residues His-269 and His-274 each coordinate Fe cation.

It belongs to the choline monooxygenase family. Requires [2Fe-2S] cluster as cofactor. Fe cation serves as cofactor. The cofactor is Mg(2+).

It localises to the plastid. The protein resides in the chloroplast stroma. It carries out the reaction choline + 2 reduced [2Fe-2S]-[ferredoxin] + O2 + 2 H(+) = betaine aldehyde hydrate + 2 oxidized [2Fe-2S]-[ferredoxin] + H2O. It participates in amine and polyamine biosynthesis; betaine biosynthesis via choline pathway; betaine aldehyde from choline (monooxygenase route): step 1/1. Its function is as follows. Catalyzes the first step of the osmoprotectant glycine betaine synthesis. The sequence is that of Choline monooxygenase, chloroplastic from Arabidopsis thaliana (Mouse-ear cress).